The primary structure comprises 109 residues: UPF0154 protein UPA3_0273 (109 aa).

Residues 42–62 (VGLGIGIVLFLIAGLIIGYFI) traverse the membrane as a helical segment.

It belongs to the UPF0154 family.

Its subcellular location is the cell membrane. In Ureaplasma parvum serovar 3 (strain ATCC 27815 / 27 / NCTC 11736), this protein is UPF0154 protein UPA3_0273.